The primary structure comprises 93 residues: Putative defensin-like protein 283 (93 aa).

The N-terminal stretch at 1–24 is a signal peptide; sequence MTKIGFYLATYATIYIILSPGLLA. Disulfide bonds link Cys43/Cys83, Cys66/Cys90, and Cys72/Cys92.

Belongs to the DEFL family.

It localises to the secreted. The polypeptide is Putative defensin-like protein 283 (Arabidopsis thaliana (Mouse-ear cress)).